The primary structure comprises 191 residues: uncharacterized protein (191 aa).

It to B.subtilis GlpP.

This is an uncharacterized protein from Escherichia coli (strain K12).